The following is a 312-amino-acid chain: DNA-directed RNA polymerase subunit alpha (312 aa).

The alpha N-terminal domain (alpha-NTD) stretch occupies residues 1–229 (MLQYQIERID…ELFQPLATVT (229 aa)). Residues 240-312 (PSPEAQIPLE…ISIPQSRTSV (73 aa)) form an alpha C-terminal domain (alpha-CTD) region.

This sequence belongs to the RNA polymerase alpha chain family. As to quaternary structure, in cyanobacteria the RNAP catalytic core is composed of 2 alpha, 1 beta, 1 beta', 1 gamma and 1 omega subunit. When a sigma factor is associated with the core the holoenzyme is formed, which can initiate transcription.

It catalyses the reaction RNA(n) + a ribonucleoside 5'-triphosphate = RNA(n+1) + diphosphate. Its function is as follows. DNA-dependent RNA polymerase catalyzes the transcription of DNA into RNA using the four ribonucleoside triphosphates as substrates. This chain is DNA-directed RNA polymerase subunit alpha, found in Prochlorococcus marinus (strain MIT 9301).